The sequence spans 129 residues: UPF0148 protein AF_2370 (129 aa).

The segment at 61 to 80 (SAAKAESEEKPPESTKPAVK) is disordered.

This sequence belongs to the UPF0148 family.

In Archaeoglobus fulgidus (strain ATCC 49558 / DSM 4304 / JCM 9628 / NBRC 100126 / VC-16), this protein is UPF0148 protein AF_2370.